The primary structure comprises 329 residues: HTH-type transcriptional regulator ArgR (329 aa).

An HTH araC/xylS-type domain is found at 214-312 (TQAVLLMEAN…GVTPREDRNQ (99 aa)). DNA-binding regions (H-T-H motif) lie at residues 231-252 (DEIAQHVCVSRRQLERIFKQYL) and 279-302 (IIQIGLSCGFSSGPHFSSAYRNFF). A disordered region spans residues 307–329 (REDRNQRRGGSAFETTFTPVERG). The span at 319–329 (FETTFTPVERG) shows a compositional bias: polar residues.

In terms of biological role, argR could be a transcriptional activator of the dauBAR operon in response to the presence of L-Arg. The polypeptide is HTH-type transcriptional regulator ArgR (argR) (Pseudomonas aeruginosa (strain ATCC 15692 / DSM 22644 / CIP 104116 / JCM 14847 / LMG 12228 / 1C / PRS 101 / PAO1)).